The chain runs to 214 residues: Response regulator GacA (214 aa).

Positions 3-119 (KVLVVDDHDL…EMVQAIRLVF (117 aa)) constitute a Response regulatory domain. Asp-54 is subject to 4-aspartylphosphate. An HTH luxR-type domain is found at 143-208 (NNSPFDLLSE…ELALLAVRHG (66 aa)). Residues 167–186 (VQTISDKLCLSPKTVNTYRY) constitute a DNA-binding region (H-T-H motif).

Phosphorylated by LemA.

Functionally, forms part of a two-component regulatory system GacA/GacA(LemA). May be involved in lesion formation, swarming and in the production of extracellular protease, syringomycin and N-acyl-L-homoserine lactone (acyl-HSL). The polypeptide is Response regulator GacA (gacA) (Pseudomonas syringae pv. syringae (strain B728a)).